Reading from the N-terminus, the 192-residue chain is Putative manganese efflux pump MntP (192 aa).

The next 6 membrane-spanning stretches (helical) occupy residues isoleucine 2–valine 22, serine 41–serine 61, alanine 62–isoleucine 82, methionine 109–phenylalanine 129, phenylalanine 136–glycine 156, and glycine 172–phenylalanine 192.

It belongs to the MntP (TC 9.B.29) family.

The protein localises to the cell membrane. Its function is as follows. Probably functions as a manganese efflux pump. This Bifidobacterium longum subsp. infantis (strain ATCC 15697 / DSM 20088 / JCM 1222 / NCTC 11817 / S12) protein is Putative manganese efflux pump MntP.